The chain runs to 424 residues: Kynurenine--oxoglutarate transaminase 1 (424 aa).

Gly36 contacts substrate. Lys82 carries the post-translational modification N6-succinyllysine. Asn185 contributes to the substrate binding site. Lys247 is subject to N6-(pyridoxal phosphate)lysine. Arg398 provides a ligand contact to substrate. At Lys413 the chain carries N6-succinyllysine.

It belongs to the class-I pyridoxal-phosphate-dependent aminotransferase family. Homodimer. The cofactor is pyridoxal 5'-phosphate.

Its subcellular location is the cytoplasm. It localises to the cytosol. It catalyses the reaction L-kynurenine + 2-oxoglutarate = kynurenate + L-glutamate + H2O. The enzyme catalyses 3-phenylpyruvate + L-glutamine = 2-oxoglutaramate + L-phenylalanine. The catalysed reaction is an S-substituted L-cysteine + H2O = a thiol + pyruvate + NH4(+). Its pathway is amino-acid degradation; L-kynurenine degradation; kynurenate from L-kynurenine: step 1/2. Its function is as follows. Catalyzes the irreversible transamination of the L-tryptophan metabolite L-kynurenine to form kynurenic acid (KA), an intermediate in the tryptophan catabolic pathway which is also a broad spectrum antagonist of the three ionotropic excitatory amino acid receptors among others. Metabolizes the cysteine conjugates of certain halogenated alkenes and alkanes to form reactive metabolites. Catalyzes the beta-elimination of S-conjugates and Se-conjugates of L-(seleno)cysteine, resulting in the cleavage of the C-S or C-Se bond. The sequence is that of Kynurenine--oxoglutarate transaminase 1 (Kyat1) from Mus musculus (Mouse).